A 459-amino-acid chain; its full sequence is NADP-specific glutamate dehydrogenase (459 aa).

Residue Lys116 is part of the active site.

It belongs to the Glu/Leu/Phe/Val dehydrogenases family. As to quaternary structure, homohexamer.

The catalysed reaction is L-glutamate + NADP(+) + H2O = 2-oxoglutarate + NH4(+) + NADPH + H(+). The polypeptide is NADP-specific glutamate dehydrogenase (GDHA) (Schwanniomyces occidentalis (Yeast)).